Here is a 223-residue protein sequence, read N- to C-terminus: Ethylene-inducing xylanase (223 aa).

The signal sequence occupies residues 1-19 (MVSFTTLLAGFVAVTGVLS). Residues 34 to 223 (QTIGPGTGFN…SSGNANINVS (190 aa)) enclose the GH11 domain. Asn94 is a glycosylation site (N-linked (GlcNAc...) asparagine). The Nucleophile role is filled by Glu119. Glu210 serves as the catalytic Proton donor.

This sequence belongs to the glycosyl hydrolase 11 (cellulase G) family. In terms of assembly, interactc with tomato LeEix2 receptor to trigger its internalization.

Its subcellular location is the secreted. It carries out the reaction Endohydrolysis of (1-&gt;4)-beta-D-xylosidic linkages in xylans.. Its pathway is glycan degradation; xylan degradation. Its function is as follows. Endo-1,4-beta-xylanase involved in the hydrolysis of xylan, a major structural heterogeneous polysaccharide found in plant biomass representing the second most abundant polysaccharide in the biosphere, after cellulose. Acts as an elicitor of plant defense responses in hosts such as tobacco (Nicotiana tabacum) or tomato (Solanum lycopersicum). Induces the production of ethylene and leads alterations in membrane function with rapid efflux of potassium, uptake of calcium, alkalization of the medium, increased leakage of cellular components and necrosis in plant hosts. EIX is translocated through the xylem of the host plant to the leaf mesophyll, leading to host response to pathogen-derived extracellular proteins in tissues distant from the invading pathogen. Greatly enhances the expression of two calcineurin B-like proteins-interacting protein kinases (CIPKs) family members, OsCIPK14 and OsCIPK15, in rice cultured cells. In tomato, triggers the defense response via binding to and subsequent internalization of the LeEix2 receptor. The polypeptide is Ethylene-inducing xylanase (Hypocrea rufa (Trichoderma viride)).